The following is a 101-amino-acid chain: RNA-binding protein Hfq (101 aa).

Residues D9–V68 form the Sm domain. Residues V62–E101 form a disordered region. Positions H70–N86 are enriched in polar residues.

It belongs to the Hfq family. Homohexamer.

In terms of biological role, RNA chaperone that binds small regulatory RNA (sRNAs) and mRNAs to facilitate mRNA translational regulation in response to envelope stress, environmental stress and changes in metabolite concentrations. Also binds with high specificity to tRNAs. This Yersinia pestis (strain Pestoides F) protein is RNA-binding protein Hfq.